The sequence spans 364 residues: Chorismate synthase (364 aa).

Arg-48 and Arg-54 together coordinate NADP(+). Residues 125–127, 238–239, Gly-278, 293–297, and Arg-319 contribute to the FMN site; these read RSS, NA, and KPTSS.

Belongs to the chorismate synthase family. Homotetramer. FMNH2 is required as a cofactor.

The enzyme catalyses 5-O-(1-carboxyvinyl)-3-phosphoshikimate = chorismate + phosphate. Its pathway is metabolic intermediate biosynthesis; chorismate biosynthesis; chorismate from D-erythrose 4-phosphate and phosphoenolpyruvate: step 7/7. Catalyzes the anti-1,4-elimination of the C-3 phosphate and the C-6 proR hydrogen from 5-enolpyruvylshikimate-3-phosphate (EPSP) to yield chorismate, which is the branch point compound that serves as the starting substrate for the three terminal pathways of aromatic amino acid biosynthesis. This reaction introduces a second double bond into the aromatic ring system. The sequence is that of Chorismate synthase from Shewanella sediminis (strain HAW-EB3).